The primary structure comprises 430 residues: Agropine synthesis reductase (430 aa).

Position 203 to 227 (203 to 227) interacts with NAD(+); that stretch reads LISGPSRGIGKAIAENLIAHGYRMS. Residue S333 coordinates substrate. The Proton acceptor role is filled by Y346.

The protein belongs to the short-chain dehydrogenases/reductases (SDR) family.

It participates in opine metabolism; mannopine biosynthesis. Its function is as follows. Reduces deoxy-fructosyl-glutamine to mannopine. The sequence is that of Agropine synthesis reductase (mas1) from Rhizobium rhizogenes (Agrobacterium rhizogenes).